A 327-amino-acid chain; its full sequence is Aspartate--ammonia ligase (327 aa).

It belongs to the class-II aminoacyl-tRNA synthetase family. AsnA subfamily.

It is found in the cytoplasm. It carries out the reaction L-aspartate + NH4(+) + ATP = L-asparagine + AMP + diphosphate + H(+). The protein operates within amino-acid biosynthesis; L-asparagine biosynthesis; L-asparagine from L-aspartate (ammonia route): step 1/1. The sequence is that of Aspartate--ammonia ligase from Bacillus cytotoxicus (strain DSM 22905 / CIP 110041 / 391-98 / NVH 391-98).